A 220-amino-acid polypeptide reads, in one-letter code: Iron-sulfur cluster repair protein YtfE (220 aa).

The protein belongs to the RIC family. YtfE subfamily. As to quaternary structure, homodimer.

The protein resides in the cytoplasm. Di-iron-containing protein involved in the repair of iron-sulfur clusters damaged by oxidative and nitrosative stress conditions. This is Iron-sulfur cluster repair protein YtfE from Escherichia coli (strain SMS-3-5 / SECEC).